A 179-amino-acid chain; its full sequence is tRNA (cytidine(56)-2'-O)-methyltransferase (179 aa).

S-adenosyl-L-methionine contacts are provided by residues leucine 82, 112–116, and 130–137; these read GAEKV and VGNQPHSE.

The protein belongs to the aTrm56 family. In terms of assembly, homodimer.

It localises to the cytoplasm. It catalyses the reaction cytidine(56) in tRNA + S-adenosyl-L-methionine = 2'-O-methylcytidine(56) in tRNA + S-adenosyl-L-homocysteine + H(+). In terms of biological role, specifically catalyzes the AdoMet-dependent 2'-O-ribose methylation of cytidine at position 56 in tRNAs. The sequence is that of tRNA (cytidine(56)-2'-O)-methyltransferase from Methanococcus maripaludis (strain C6 / ATCC BAA-1332).